Consider the following 180-residue polypeptide: ATP-dependent protease subunit HslV (180 aa).

The active site involves Thr-7. Residues Gly-165, Cys-168, and Thr-171 each coordinate Na(+).

This sequence belongs to the peptidase T1B family. HslV subfamily. In terms of assembly, a double ring-shaped homohexamer of HslV is capped on each side by a ring-shaped HslU homohexamer. The assembly of the HslU/HslV complex is dependent on binding of ATP.

It localises to the cytoplasm. The enzyme catalyses ATP-dependent cleavage of peptide bonds with broad specificity.. With respect to regulation, allosterically activated by HslU binding. Protease subunit of a proteasome-like degradation complex believed to be a general protein degrading machinery. In Bacillus cereus (strain ATCC 10987 / NRS 248), this protein is ATP-dependent protease subunit HslV.